Here is a 183-residue protein sequence, read N- to C-terminus: MTKQPEDWLDDVPGDDIEDEDDEIIWVSKSEIKRDAEELKRLGAELVDLGRNALDKIPLDADLRDAIELAQRIKMEGRRRQLQLIGKMLRQRDVDPIRQALDKLKNRHNQQVVLFHKLEHLRDRLIVEGDDAVAEILNLWPNADRQQLRSLIRNAKKEKEGNKPPKSARQIFQYLRELAENEG.

It belongs to the DarP family.

Its subcellular location is the cytoplasm. In terms of biological role, member of a network of 50S ribosomal subunit biogenesis factors which assembles along the 30S-50S interface, preventing incorrect 23S rRNA structures from forming. Promotes peptidyl transferase center (PTC) maturation. The sequence is that of Dual-action ribosomal maturation protein DarP from Salmonella arizonae (strain ATCC BAA-731 / CDC346-86 / RSK2980).